The chain runs to 556 residues: Formate--tetrahydrofolate ligase (556 aa).

An ATP-binding site is contributed by 65 to 72 (TPAGEGKS).

The protein belongs to the formate--tetrahydrofolate ligase family.

The enzyme catalyses (6S)-5,6,7,8-tetrahydrofolate + formate + ATP = (6R)-10-formyltetrahydrofolate + ADP + phosphate. It participates in one-carbon metabolism; tetrahydrofolate interconversion. The polypeptide is Formate--tetrahydrofolate ligase (Clostridium perfringens (strain ATCC 13124 / DSM 756 / JCM 1290 / NCIMB 6125 / NCTC 8237 / Type A)).